A 153-amino-acid chain; its full sequence is UPF0756 membrane protein LSL_0936 (153 aa).

5 consecutive transmembrane segments (helical) span residues 4 to 24 (WIFL…SLLI), 26 to 46 (GAVV…YPVI), 51 to 71 (INWG…TGQI), 86 to 106 (WIAV…VNLL), and 116 to 136 (LVIG…GPVI).

This sequence belongs to the UPF0756 family.

It localises to the cell membrane. This chain is UPF0756 membrane protein LSL_0936, found in Ligilactobacillus salivarius (strain UCC118) (Lactobacillus salivarius).